The sequence spans 516 residues: Putative F-box and FNIP repeat-containing protein L414 (516 aa).

An F-box domain is found at 4–49 (INDLNMDVILHLLTFLTDKNKLNFMMTCTHLYQFISCVKYNNFQLF). 5 FNIP repeats span residues 123–165 (FNHT…FGEN), 166–208 (FNKM…LMYS), 341–383 (YNPK…NFNG), 385–428 (YDNI…FGKL), and 429–470 (YNKP…FGYM).

This is Putative F-box and FNIP repeat-containing protein L414 from Acanthamoeba polyphaga (Amoeba).